Consider the following 71-residue polypeptide: Sec-independent protein translocase protein TatA (71 aa).

Residues 1–21 traverse the membrane as a helical segment; sequence MGSFSMWHWLIVLAIVLLLFG. The tract at residues 40–71 is disordered; it reads KKGMSDDDTAPDGTPKPADQSKTVDHRADDHK. Positions 61-71 are enriched in basic and acidic residues; the sequence is KTVDHRADDHK.

The protein belongs to the TatA/E family. The Tat system comprises two distinct complexes: a TatABC complex, containing multiple copies of TatA, TatB and TatC subunits, and a separate TatA complex, containing only TatA subunits. Substrates initially bind to the TatABC complex, which probably triggers association of the separate TatA complex to form the active translocon.

It localises to the cell inner membrane. Part of the twin-arginine translocation (Tat) system that transports large folded proteins containing a characteristic twin-arginine motif in their signal peptide across membranes. TatA could form the protein-conducting channel of the Tat system. This chain is Sec-independent protein translocase protein TatA, found in Allorhizobium ampelinum (strain ATCC BAA-846 / DSM 112012 / S4) (Agrobacterium vitis (strain S4)).